We begin with the raw amino-acid sequence, 339 residues long: Sulfate/thiosulfate import ATP-binding protein CysA (339 aa).

One can recognise an ABC transporter domain in the interval 3 to 237 (IAIRSVEKQF…PETAFVCGFV (235 aa)). 35-42 (GPSGSGKT) contributes to the ATP binding site.

This sequence belongs to the ABC transporter superfamily. Sulfate/tungstate importer (TC 3.A.1.6) family. In terms of assembly, the complex is composed of two ATP-binding proteins (CysA), two transmembrane proteins (CysT and CysW) and a solute-binding protein (CysP).

Its subcellular location is the cell inner membrane. The enzyme catalyses sulfate(out) + ATP + H2O = sulfate(in) + ADP + phosphate + H(+). It catalyses the reaction thiosulfate(out) + ATP + H2O = thiosulfate(in) + ADP + phosphate + H(+). Functionally, part of the ABC transporter complex CysAWTP involved in sulfate/thiosulfate import. Responsible for energy coupling to the transport system. In Caulobacter vibrioides (strain ATCC 19089 / CIP 103742 / CB 15) (Caulobacter crescentus), this protein is Sulfate/thiosulfate import ATP-binding protein CysA.